Reading from the N-terminus, the 663-residue chain is A-type ATP synthase subunit I (663 aa).

The next 7 membrane-spanning stretches (helical) occupy residues 376-396 (FFFG…IVAA), 412-432 (FAYI…LFGS), 468-488 (LAAL…GFVI), 497-517 (GAVF…LLAS), 534-554 (IALF…LMII), 568-588 (ARLM…NVLV), and 589-609 (GMVW…IIFF).

Belongs to the V-ATPase 116 kDa subunit family. Has multiple subunits with at least A(3), B(3), C, D, E, F, H, I and proteolipid K(x).

Its subcellular location is the cell membrane. In terms of biological role, component of the A-type ATP synthase that produces ATP from ADP in the presence of a proton gradient across the membrane. The sequence is that of A-type ATP synthase subunit I from Thermococcus kodakarensis (strain ATCC BAA-918 / JCM 12380 / KOD1) (Pyrococcus kodakaraensis (strain KOD1)).